A 562-amino-acid chain; its full sequence is Arginine--tRNA ligase (562 aa).

Residues 129–139 (ANPTGPLHVGH) carry the 'HIGH' region motif.

It belongs to the class-I aminoacyl-tRNA synthetase family. Monomer.

The protein localises to the cytoplasm. The catalysed reaction is tRNA(Arg) + L-arginine + ATP = L-arginyl-tRNA(Arg) + AMP + diphosphate. This is Arginine--tRNA ligase from Xanthomonas campestris pv. campestris (strain B100).